Consider the following 432-residue polypeptide: Trigger factor (432 aa).

The PPIase FKBP-type domain occupies 161–246 (EDRVTIDFTG…LKKVEERELP (86 aa)).

It belongs to the FKBP-type PPIase family. Tig subfamily.

Its subcellular location is the cytoplasm. It catalyses the reaction [protein]-peptidylproline (omega=180) = [protein]-peptidylproline (omega=0). In terms of biological role, involved in protein export. Acts as a chaperone by maintaining the newly synthesized protein in an open conformation. Functions as a peptidyl-prolyl cis-trans isomerase. The protein is Trigger factor of Cronobacter sakazakii (strain ATCC BAA-894) (Enterobacter sakazakii).